Consider the following 567-residue polypeptide: DNA-binding protein REPIN1 (567 aa).

Positions 17-52 (PRLLSGPSQESPQTLGKESRGLRQQGTSVAQSGAQA) are disordered. Polar residues predominate over residues 22–50 (GPSQESPQTLGKESRGLRQQGTSVAQSGA). Serine 27 bears the Phosphoserine mark. Residue threonine 30 is modified to Phosphothreonine. Lysine 33 carries the post-translational modification N6-acetyllysine. The segment at 57–79 (HRCAHCRRHFPGWVALWLHTRRC) adopts a C2H2-type 1; atypical zinc-finger fold. 7 C2H2-type zinc fingers span residues 85–107 (LPCP…RQVH), 116–138 (FACH…LRAH), 145–168 (IACP…RRCH), 177–199 (FICG…KRVH), 236–258 (FQCA…RRVH), 264–286 (HQCP…RRIH), and 292–314 (YPCK…SKIH). Lysine 276 bears the N6-acetyllysine mark. The span at 305–315 (PNLLSHSKIHK) shows a compositional bias: basic residues. The disordered stretch occupies residues 305-372 (PNLLSHSKIH…HPQDPIEAPP (68 aa)). Positions 345 to 362 (PAVPLKPAQEPPPGAPPE) are enriched in pro residues. C2H2-type zinc fingers lie at residues 375–397 (YSCD…QRQH), 403–425 (FTCA…SRVH), 431–453 (FACE…RRDH), 459–481 (FVCP…RRIH), 487–509 (YVCP…RRIH), 515–537 (YACP…RKSH), and 543–565 (FCCA…QKKH).

As to quaternary structure, homodimers and homomultimers. Found in a complex with RIP60 and RIP100. Expressed in adipose tissue and bone tissue.

The protein localises to the nucleus. Its subcellular location is the cytoplasm. It is found in the cytosol. Sequence-specific double-stranded DNA-binding protein. Binds ATT-rich and T-rich DNA sequences and facilitates DNA bending. May regulate the expression of genes involved in cellular fatty acid import, including SCARB1/CD36, and genes involved in lipid droplet formation. May regulate the expression of LCN2, and thereby influence iron metabolism and apoptosis-related pathways. May regulate the expression of genes involved in glucose transport. The sequence is that of DNA-binding protein REPIN1 (REPIN1) from Homo sapiens (Human).